Reading from the N-terminus, the 973-residue chain is MADHKFLSIRGAREHNLKNVDLDLPRDSLIVMTGLSGSGKSSLAFDTIYAEGQRRYVESLSAYARQFLEMMQKPDVDQIDGLSPAISIEQKTTSKNPRSTVGTVTEIYDYMRLLFARVGVPYSPATGLPIESQTVSQMVDRVLALEEGTRLFLLAPIVRGRKGEYRKELLELQKKGFQRVKVDGVFYEIADVPALDKKYKHDIDVVVDRIVVRGDLATRLADSIETALKLAEGLAVAEFADKPLDSSQTGEDSVNKSKNETHERILFSEKFACPVSGFTIPEIEPRLFSFNNPFGACPTCDGLGSQRAIDPNLVVPDENVSLRDGAVSPWAKSTSPYYVQTLEALGKAYNFKLGDKFKDLSAEAQDAILRGTGEREVTFQYDDGLRSYKTTKTFEGVIPNLERRWKETESAWMREEIERFMSATPCPVCKGYRLKPEALAVKIGGKHIGEVTEQSIRNADKWFTDLPAQLNDKQNEIAVRVLKEIRERLRFLNDVGLDYLTLSRNSGTLSGGESQRIRLASQIGSGLTGVLYVLDEPSIGLHQRDNTRLLDTLKHLRDIGNTVIVVEHDEDAILHADYVVDMGPAAGIHGGEIIAQGTPQQVMANPNSITGKYLSGALEVATPGVRREAKKNRRLKIVGARGNNLKNVTAEIPLGTFTAVTGVSGGGKSTFLIETLFKAASRRIMGSREHPAEHDRIEGLEFLDKVIDIDQSPIGRTPRSNPATYTGAFTPIRDWFAGLPEAKARGYQPGRFSFNVKGGRCEACQGDGVIKIEMHFLPDVYVTCDVCHGKRYNRETLDVLFKGKSIADVLDMTVEEGVDFFAAVPGVRDKLDTLKQVGLGYIHIGQQATTLSGGEAQRIKLAKELSRKATGKTLYILDEPTTGLHFHDVAKLLEVLHELVDQGNTVVVIEHNLEVIKTADWVLDLGPEGGDGGGELVAQGTPEAIVREKRSYTGQFLKELLERRPGGKREAAE.

34–41 is an ATP binding site; that stretch reads GLSGSGKS. 2 ABC transporter domains span residues 330-609 and 629-958; these read WAKS…PNSI and AKKN…QFLK. 662–669 contributes to the ATP binding site; it reads GVSGGGKS. Residues 761 to 787 form a C4-type zinc finger; that stretch reads CEACQGDGVIKIEMHFLPDVYVTCDVC.

It belongs to the ABC transporter superfamily. UvrA family. As to quaternary structure, forms a heterotetramer with UvrB during the search for lesions.

The protein resides in the cytoplasm. Its function is as follows. The UvrABC repair system catalyzes the recognition and processing of DNA lesions. UvrA is an ATPase and a DNA-binding protein. A damage recognition complex composed of 2 UvrA and 2 UvrB subunits scans DNA for abnormalities. When the presence of a lesion has been verified by UvrB, the UvrA molecules dissociate. The protein is UvrABC system protein A of Mesorhizobium japonicum (strain LMG 29417 / CECT 9101 / MAFF 303099) (Mesorhizobium loti (strain MAFF 303099)).